A 310-amino-acid polypeptide reads, in one-letter code: Beta-1,3-galactosyltransferase 5 (310 aa).

Residues 1 to 7 (MAFPKMR) are Cytoplasmic-facing. Residues 8 to 28 (LMYICLLVLGALCLYFSMYSL) traverse the membrane as a helical; Signal-anchor for type II membrane protein segment. At 29-310 (NPFKEQSFVY…NSRGEDCPPV (282 aa)) the chain is on the lumenal side. N-linked (GlcNAc...) asparagine glycans are attached at residues Asn-130, Asn-174, and Asn-231.

This sequence belongs to the glycosyltransferase 31 family. In terms of tissue distribution, expressed in stomach, jejunum, colon, pancreas, small intestine, testis and gastrointestinal and pancreatic cancer cell lines. Hardly detected in lung, liver, adrenal gland and peripheral blood leukocytes.

It is found in the golgi apparatus membrane. It catalyses the reaction a globoside Gb4Cer (d18:1(4E)) + UDP-alpha-D-galactose = a globoside GalGb4Cer (d18:1(4E)) + UDP + H(+). Its pathway is protein modification; protein glycosylation. In terms of biological role, catalyzes the transfer of Gal to GlcNAc-based acceptors with a preference for the core3 O-linked glycan GlcNAc(beta1,3)GalNAc structure. Can use glycolipid LC3Cer as an efficient acceptor. This is Beta-1,3-galactosyltransferase 5 from Homo sapiens (Human).